The primary structure comprises 316 residues: Pantothenate kinase (316 aa).

Residue 95 to 102 (GSVAVGKS) participates in ATP binding.

This sequence belongs to the prokaryotic pantothenate kinase family.

It is found in the cytoplasm. The catalysed reaction is (R)-pantothenate + ATP = (R)-4'-phosphopantothenate + ADP + H(+). It participates in cofactor biosynthesis; coenzyme A biosynthesis; CoA from (R)-pantothenate: step 1/5. In Pectobacterium carotovorum subsp. carotovorum (strain PC1), this protein is Pantothenate kinase.